The sequence spans 367 residues: Undecaprenyl-phosphate alpha-N-acetylglucosaminyl 1-phosphate transferase (367 aa).

A run of 9 helical transmembrane segments spans residues 3–23, 45–65, 69–89, 129–149, 158–178, 187–207, 213–233, 242–262, and 318–338; these read LLTA…FIFL, GVIP…MFGL, YIPH…VGAM, WELV…WAAI, IDGL…LILW, MWCF…LGIL, VFMG…LLLE, ISPV…VAIM, and VPEW…GYCI.

It belongs to the glycosyltransferase 4 family. WecA subfamily. It depends on Mg(2+) as a cofactor. Requires Mn(2+) as cofactor.

The protein localises to the cell inner membrane. The catalysed reaction is di-trans,octa-cis-undecaprenyl phosphate + UDP-N-acetyl-alpha-D-glucosamine = N-acetyl-alpha-D-glucosaminyl-di-trans,octa-cis-undecaprenyl diphosphate + UMP. It functions in the pathway bacterial outer membrane biogenesis; LPS O-antigen biosynthesis. The protein operates within bacterial outer membrane biogenesis; enterobacterial common antigen biosynthesis. Inhibited by tunicamycin. In terms of biological role, catalyzes the transfer of the GlcNAc-1-phosphate moiety from UDP-GlcNAc onto the carrier lipid undecaprenyl phosphate (C55-P), yielding GlcNAc-pyrophosphoryl-undecaprenyl (GlcNAc-PP-C55). This is Undecaprenyl-phosphate alpha-N-acetylglucosaminyl 1-phosphate transferase from Salmonella typhimurium (strain LT2 / SGSC1412 / ATCC 700720).